The following is a 634-amino-acid chain: ATP-dependent clpX-like chaperone, mitochondrial (634 aa).

The transit peptide at 1-56 (MSSCGACTCGAAAARLLTTSLTSAQRGISCGRIHVPVLGRLGTTLDAQALRRAPLR) directs the protein to the mitochondrion. The disordered stretch occupies residues 69-102 (DGANKDGSGDGNKKSVTEGSSKKSGSGNSGKGGN). The segment covering 70 to 84 (GANKDGSGDGNKKSV) has biased composition (basic and acidic residues). Residues 85 to 94 (TEGSSKKSGS) show a composition bias toward low complexity. The ClpX-type ZB domain maps to 94–147 (SGNSGKGGNQLRCPKCGDLCTHVETFVSSTRFVKCEKCHHFFVVLSEADSKKSI). Zn(2+) is bound by residues cysteine 106, cysteine 109, cysteine 128, and cysteine 131. 295–302 (PTGSGKTL) is an ATP binding site. Lysine 438 is subject to N6-acetyllysine. Residues 599–611 (KEPGYIRAPSKES) are compositionally biased toward basic and acidic residues. The tract at residues 599–634 (KEPGYIRAPSKESSEEEYDSGVEEDGWPRQADAANS) is disordered. The segment covering 612–623 (SEEEYDSGVEED) has biased composition (acidic residues). Serine 618 carries the post-translational modification Phosphoserine.

It belongs to the ClpX chaperone family. In terms of assembly, homohexamer that forms a ring structure; this hexamerization requires ATP binding. Component of the ClpXP complex formed by the assembly of two CLPP heptameric rings with two CLPX hexameric rings, giving rise to a symmetrical structure with two central CLPP rings flanked by a CLPX ring at either end of the complex. Interacts with TFAM. Detected in liver (at protein level).

The protein resides in the mitochondrion. It is found in the mitochondrion matrix. The protein localises to the mitochondrion nucleoid. It carries out the reaction ATP + H2O = ADP + phosphate + H(+). ATP-dependent chaperone that functions as an unfoldase. As part of the ClpXP protease complex, it recognizes specific protein substrates, unfolds them using energy derived from ATP hydrolysis, and then translocates them to the proteolytic subunit (CLPP) of the ClpXP complex for degradation. Thanks to its chaperone activity, it also functions in the incorporation of the pyridoxal phosphate cofactor into 5-aminolevulinate synthase, thereby activating 5-aminolevulinate (ALA) synthesis, the first step in heme biosynthesis. This chaperone is also involved in the control of mtDNA nucleoid distribution, by regulating mitochondrial transcription factor A (TFAM) activity. In Mus musculus (Mouse), this protein is ATP-dependent clpX-like chaperone, mitochondrial.